The sequence spans 627 residues: 1-deoxy-D-xylulose-5-phosphate synthase (627 aa).

Residues His-80 and 121 to 123 (GHS) each bind thiamine diphosphate. Mg(2+) is bound at residue Asp-152. Residues 153–154 (GA), Asn-181, Tyr-288, and Glu-370 contribute to the thiamine diphosphate site. Asn-181 serves as a coordination point for Mg(2+).

This sequence belongs to the transketolase family. DXPS subfamily. Homodimer. The cofactor is Mg(2+). Thiamine diphosphate serves as cofactor.

It carries out the reaction D-glyceraldehyde 3-phosphate + pyruvate + H(+) = 1-deoxy-D-xylulose 5-phosphate + CO2. Its pathway is metabolic intermediate biosynthesis; 1-deoxy-D-xylulose 5-phosphate biosynthesis; 1-deoxy-D-xylulose 5-phosphate from D-glyceraldehyde 3-phosphate and pyruvate: step 1/1. Catalyzes the acyloin condensation reaction between C atoms 2 and 3 of pyruvate and glyceraldehyde 3-phosphate to yield 1-deoxy-D-xylulose-5-phosphate (DXP). The polypeptide is 1-deoxy-D-xylulose-5-phosphate synthase (Aliivibrio fischeri (strain MJ11) (Vibrio fischeri)).